A 208-amino-acid polypeptide reads, in one-letter code: Large ribosomal subunit protein bL25 (208 aa).

Belongs to the bacterial ribosomal protein bL25 family. CTC subfamily. Part of the 50S ribosomal subunit; part of the 5S rRNA/L5/L18/L25 subcomplex. Contacts the 5S rRNA. Binds to the 5S rRNA independently of L5 and L18.

This is one of the proteins that binds to the 5S RNA in the ribosome where it forms part of the central protuberance. The protein is Large ribosomal subunit protein bL25 of Syntrophotalea carbinolica (strain DSM 2380 / NBRC 103641 / GraBd1) (Pelobacter carbinolicus).